The sequence spans 282 residues: Small ribosomal subunit protein uS2 (282 aa).

The interval 245 to 266 is disordered; the sequence is AEEAVEELPLPTGEAQDEASSK.

This sequence belongs to the universal ribosomal protein uS2 family.

This Chlamydia trachomatis serovar D (strain ATCC VR-885 / DSM 19411 / UW-3/Cx) protein is Small ribosomal subunit protein uS2 (rpsB).